Here is a 233-residue protein sequence, read N- to C-terminus: Biosynthetic peptidoglycan transglycosylase (233 aa).

A helical membrane pass occupies residues 8 to 28 (LIALPVGIFIFFNAYVYGNII).

It belongs to the glycosyltransferase 51 family.

It is found in the cell inner membrane. The enzyme catalyses [GlcNAc-(1-&gt;4)-Mur2Ac(oyl-L-Ala-gamma-D-Glu-L-Lys-D-Ala-D-Ala)](n)-di-trans,octa-cis-undecaprenyl diphosphate + beta-D-GlcNAc-(1-&gt;4)-Mur2Ac(oyl-L-Ala-gamma-D-Glu-L-Lys-D-Ala-D-Ala)-di-trans,octa-cis-undecaprenyl diphosphate = [GlcNAc-(1-&gt;4)-Mur2Ac(oyl-L-Ala-gamma-D-Glu-L-Lys-D-Ala-D-Ala)](n+1)-di-trans,octa-cis-undecaprenyl diphosphate + di-trans,octa-cis-undecaprenyl diphosphate + H(+). The protein operates within cell wall biogenesis; peptidoglycan biosynthesis. In terms of biological role, peptidoglycan polymerase that catalyzes glycan chain elongation from lipid-linked precursors. In Neisseria meningitidis serogroup C / serotype 2a (strain ATCC 700532 / DSM 15464 / FAM18), this protein is Biosynthetic peptidoglycan transglycosylase.